We begin with the raw amino-acid sequence, 392 residues long: F-box only protein 5-A (392 aa).

The interval 1-21 is disordered; sequence MMCGFASNQSPKKLSSKKSSA. The span at 7–20 shows a compositional bias: low complexity; the sequence is SNQSPKKLSSKKSS. The F-box domain maps to 197 to 244; it reads AELFHRDFKHLLTKILRHLSAMDLINVISVSTTWRKLLQKDNWAYNAY. A ZBR-type zinc finger spans residues 319-367; the sequence is SLKVCVDCGSPAKHDPCLHRAICTRESCKLDFCTRCSCKYHFSKSCLMS. C323, C326, C341, C346, C351, C354, H359, and C364 together coordinate Zn(2+).

In terms of assembly, part of a SCF (SKP1-cullin-F-box) protein ligase complex. Interacts with btrc. Interacts with skp1. Interacts with cdc20. Interacts with pin1; stabilizes fbxo5 by preventing its association with btrc in an isomerization-dependent pathway; this interaction is present during G2 phase and prevents fbxo5 degradation. Interacts with plk1. Post-translationally, proteolysed; proteolysis is induced by both cyclin B-cdk1 and cyclin A-cdk1/2 complex through probable phosphorylation. Proteolysis is inhibited by pin1 during G2.

It is found in the nucleus. The protein localises to the cytoplasm. It localises to the cytoskeleton. The protein resides in the spindle. Its subcellular location is the microtubule organizing center. It is found in the centrosome. It functions in the pathway protein modification; protein ubiquitination. Its function is as follows. Regulates progression through early mitosis by inhibiting the anaphase promoting complex/cyclosome (APC). Binds to the APC activator cdc20 to prevent APC activation. Can also bind directly to the APC to inhibit substrate-binding. Required to arrest unfertilized eggs at metaphase of meiosis II, by preventing their release from metaphase of meiosis II, through inhibition of APC-dependent cyclin B destruction leading to stabilization of cyclin B-cdk1 complex activity. This Xenopus laevis (African clawed frog) protein is F-box only protein 5-A (fbxo5-a).